The sequence spans 374 residues: Alcohol dehydrogenase class-3 (374 aa).

Ala-2 carries the post-translational modification N-acetylalanine. Cys-45, His-67, Cys-97, Cys-100, Cys-103, Cys-111, and Cys-174 together coordinate Zn(2+). Residue Lys-233 is modified to N6-succinyllysine. Residue Ser-247 is modified to Phosphoserine. Position 315 is an N6-succinyllysine (Lys-315). Ser-324 and Ser-351 each carry phosphoserine.

Belongs to the zinc-containing alcohol dehydrogenase family. Class-III subfamily. As to quaternary structure, homodimer. Requires Zn(2+) as cofactor.

The protein resides in the cytoplasm. The enzyme catalyses a primary alcohol + NAD(+) = an aldehyde + NADH + H(+). It catalyses the reaction a secondary alcohol + NAD(+) = a ketone + NADH + H(+). The catalysed reaction is S-(hydroxymethyl)glutathione + NADP(+) = S-formylglutathione + NADPH + H(+). It carries out the reaction S-(hydroxymethyl)glutathione + NAD(+) = S-formylglutathione + NADH + H(+). The enzyme catalyses 20-oxo-(5Z,8Z,11Z,14Z)-eicosatetraenoate + NAD(+) + H2O = (5Z,8Z,11Z,14Z)-eicosatetraenedioate + NADH + 2 H(+). It catalyses the reaction 20-hydroxy-(5Z,8Z,11Z,14Z)-eicosatetraenoate + NAD(+) = 20-oxo-(5Z,8Z,11Z,14Z)-eicosatetraenoate + NADH + H(+). The catalysed reaction is S-nitrosoglutathione + NADH + H(+) = S-(hydroxysulfenamide)glutathione + NAD(+). Functionally, catalyzes the oxidation of long-chain primary alcohols and the oxidation of S-(hydroxymethyl) glutathione. Also oxidizes long chain omega-hydroxy fatty acids, such as 20-HETE, producing both the intermediate aldehyde, 20-oxoarachidonate and the end product, a dicarboxylic acid, (5Z,8Z,11Z,14Z)-eicosatetraenedioate. Class-III ADH is remarkably ineffective in oxidizing ethanol. Required for clearance of cellular formaldehyde, a cytotoxic and carcinogenic metabolite that induces DNA damage. Also acts as a S-nitroso-glutathione reductase by catalyzing the NADH-dependent reduction of S-nitrosoglutathione, thereby regulating protein S-nitrosylation. The polypeptide is Alcohol dehydrogenase class-3 (Oryctolagus cuniculus (Rabbit)).